A 311-amino-acid polypeptide reads, in one-letter code: Probable inactive peptidyl-prolyl cis-trans isomerase-like 6 (311 aa).

The PPIase cyclophilin-type domain occupies 145–308 (FLDICIDSSP…HMCRITDSGD (164 aa)).

This sequence belongs to the cyclophilin-type PPIase family.

In terms of biological role, probable inactive PPIase with no peptidyl-prolyl cis-trans isomerase activity. This Homo sapiens (Human) protein is Probable inactive peptidyl-prolyl cis-trans isomerase-like 6.